An 87-amino-acid polypeptide reads, in one-letter code: HssA/B-like protein 31 (87 aa).

This sequence belongs to the hssA/B family.

In Dictyostelium discoideum (Social amoeba), this protein is HssA/B-like protein 31 (hssl31).